Here is a 378-residue protein sequence, read N- to C-terminus: RIB43A-like with coiled-coils protein 1 (378 aa).

2 coiled-coil regions span residues 153–250 (RMQQ…VTSD) and 279–334 (EQRA…CAEF).

It belongs to the RIB43A family. In terms of assembly, microtubule inner protein component of sperm flagellar doublet microtubules.

It is found in the cytoplasm. The protein localises to the cytoskeleton. It localises to the flagellum axoneme. This Rattus norvegicus (Rat) protein is RIB43A-like with coiled-coils protein 1 (Ribc1).